The primary structure comprises 928 residues: Protein NETWORKED 2B (928 aa).

Residues 10-90 (YSWWWASHIR…ERYDHLSTEL (81 aa)) form the NAB domain. The tract at residues 108 to 144 (PLVDDDDDDDDDNPKKPPKHLHLIPSGTNIPQVPEVP) is disordered. Residues 110–119 (VDDDDDDDDD) are compositionally biased toward acidic residues. Coiled coils occupy residues 207–309 (SYEQ…AKKA) and 360–445 (ALLK…VKMD). Disordered regions lie at residues 447–472 (DVEG…SISN) and 489–529 (KQSR…EERR). Residues 457–468 (DIQEEDTVEDSD) show a composition bias toward acidic residues. The span at 489–506 (KQSRDQESMQEEKSETRD) shows a compositional bias: basic and acidic residues. Positions 547 to 574 (LLDEYSSVLRDYREVKRKLSEVEKKNRD) form a coiled coil. Residues 620 to 651 (AESVSISHSSNSSFSMPPLPQRGDLKRASEQE) are disordered. Residues 622-634 (SVSISHSSNSSFS) show a composition bias toward low complexity. Over residues 642-651 (GDLKRASEQE) the composition is skewed to basic and acidic residues.

The protein belongs to the NET family.

Plant-specific actin binding protein. May be part of a membrane-cytoskeletal adapter complex. The chain is Protein NETWORKED 2B from Arabidopsis thaliana (Mouse-ear cress).